Here is a 199-residue protein sequence, read N- to C-terminus: Recombination protein RecR (199 aa).

The C4-type zinc finger occupies 57 to 72 (CSICGNITEGDPCSIC). A Toprim domain is found at 80 to 176 (THVLVVEQPK…KVTRLAHGLS (97 aa)).

Belongs to the RecR family.

Functionally, may play a role in DNA repair. It seems to be involved in an RecBC-independent recombinational process of DNA repair. It may act with RecF and RecO. This chain is Recombination protein RecR, found in Levilactobacillus brevis (strain ATCC 367 / BCRC 12310 / CIP 105137 / JCM 1170 / LMG 11437 / NCIMB 947 / NCTC 947) (Lactobacillus brevis).